The chain runs to 497 residues: Serine/arginine-rich protein PSR (497 aa).

An N-terminal signal peptide occupies residues 1–19 (MYSRCIALVFVGLLASSLA). At 20 to 366 (ANCYGPAGKL…HHGLSSQKLG (347 aa)) the chain is on the extracellular side. Residues Asn92, Asn193, Asn202, Asn261, and Asn283 are each glycosylated (N-linked (GlcNAc...) asparagine). Residues 367-387 (LAIGLPIAGVFLIILIAAAII) traverse the membrane as a helical segment. The Cytoplasmic segment spans residues 388–497 (YYRKRRESEK…ESASRDSDSD (110 aa)). The interval 424 to 450 (MGSKTMQAMLDMRDDDESEHDSDDGYG) is necessary for phosphorylation by PSRPK in vitro. The segment covering 436–447 (RDDDESEHDSDD) has biased composition (acidic residues). The segment at 436-497 (RDDDESEHDS…ESASRDSDSD (62 aa)) is disordered. A compositionally biased stretch (basic residues) spans 459–471 (GRSRSRSRSRSVS). The segment covering 476-497 (GSRDARSESDPGESASRDSDSD) has biased composition (basic and acidic residues).

In terms of processing, phosphorylated on serine residues in the RS domain by PSRPK.

The protein localises to the membrane. The sequence is that of Serine/arginine-rich protein PSR from Physarum polycephalum (Slime mold).